Reading from the N-terminus, the 201-residue chain is Probable chemoreceptor glutamine deamidase CheD 1 (201 aa).

Belongs to the CheD family.

The enzyme catalyses L-glutaminyl-[protein] + H2O = L-glutamyl-[protein] + NH4(+). Probably deamidates glutamine residues to glutamate on methyl-accepting chemotaxis receptors (MCPs), playing an important role in chemotaxis. This chain is Probable chemoreceptor glutamine deamidase CheD 1, found in Geobacter sulfurreducens (strain ATCC 51573 / DSM 12127 / PCA).